The sequence spans 421 residues: Ribosomal RNA large subunit methyltransferase G (421 aa).

The interval 389–421 (EPELEQESDLNSKLDANTEVPHPQSALYGKPKA) is disordered.

The protein belongs to the methyltransferase superfamily. RlmG family.

The protein localises to the cytoplasm. It carries out the reaction guanosine(1835) in 23S rRNA + S-adenosyl-L-methionine = N(2)-methylguanosine(1835) in 23S rRNA + S-adenosyl-L-homocysteine + H(+). Specifically methylates the guanine in position 1835 (m2G1835) of 23S rRNA. In Shewanella halifaxensis (strain HAW-EB4), this protein is Ribosomal RNA large subunit methyltransferase G.